A 130-amino-acid polypeptide reads, in one-letter code: Fluoride-specific ion channel FluC (130 aa).

4 helical membrane-spanning segments follow: residues V7 to W27, L36 to F56, A69 to V89, and L99 to I119. Positions 76 and 79 each coordinate Na(+).

The protein belongs to the fluoride channel Fluc/FEX (TC 1.A.43) family.

Its subcellular location is the cell inner membrane. The catalysed reaction is fluoride(in) = fluoride(out). With respect to regulation, na(+) is not transported, but it plays an essential structural role and its presence is essential for fluoride channel function. In terms of biological role, fluoride-specific ion channel. Important for reducing fluoride concentration in the cell, thus reducing its toxicity. The chain is Fluoride-specific ion channel FluC from Albidiferax ferrireducens (strain ATCC BAA-621 / DSM 15236 / T118) (Rhodoferax ferrireducens).